Consider the following 363-residue polypeptide: MVDHAPFETDISTLTRFVLEEGRKAGGTGEMTQLLNSLCTAIKAISSAVRQAGIAQLYGIAGSTNVTGDQVKKLDILSNDLVINMLKSSYATCVLVSEEDTHAIIIEPEKRGKYVVCFDPLDGSSNIDCLASIGTIFGIYRKTSANEPSEKDALQPGRNLVAAGYALYGSATMLVLAMNCGVNCFMLDPSIGEFILVDRDVKIKKKGNIYSINEGYAKDFDPAINEYIQRKKFPPDNSAPYGARYVGSMVADVHRTLVYGGIFLYPANKKNPSGKLRLLYECNPIAYVMEKAGGLATTGNEDILDIVPTEIHQKAPVIMGSTEDVQEFLEIYNKDKAKSRPSLPLPQSRARESPVHSICDELF.

An N-acetylvaline modification is found at Val-2. Residues 18-22 (VLEEG) and 28-32 (TGEMT) each bind AMP. Positions 69 and 98 each coordinate Mg(2+). Position 113 to 114 (113 to 114 (KY)) interacts with AMP. Asp-119, Leu-121, and Asp-122 together coordinate Mg(2+). Position 122 to 125 (122 to 125 (DGSS)) interacts with substrate. Arg-141 is an AMP binding site. The residue at position 151 (Lys-151) is an N6-succinyllysine. Residues 213-216 (NEGY), 244-249 (RYVGSM), Tyr-265, and 275-277 (KLR) contribute to the substrate site. Phosphotyrosine is present on residues Tyr-216, Tyr-245, and Tyr-265. Residue Glu-281 participates in Mg(2+) binding. Ser-339 and Ser-353 each carry phosphoserine.

The protein belongs to the FBPase class 1 family. Homotetramer. Mg(2+) serves as cofactor.

It carries out the reaction beta-D-fructose 1,6-bisphosphate + H2O = beta-D-fructose 6-phosphate + phosphate. The protein operates within carbohydrate biosynthesis; gluconeogenesis. Subject to complex allosteric regulation. The enzyme can assume an active R-state, or an inactive T-state. Intermediate conformations may exist. AMP acts as an allosteric inhibitor. AMP binding affects the turnover of bound substrate and not the affinity for substrate. Fructose 2,6-bisphosphate acts as a competitive inhibitor. Fructose 2,6-bisphosphate and AMP have synergistic effects. Functionally, catalyzes the hydrolysis of fructose 1,6-bisphosphate to fructose 6-phosphate in the presence of divalent cations, acting as a rate-limiting enzyme in gluconeogenesis. Plays a role in regulating glucose sensing and insulin secretion of pancreatic beta-cells. Appears to modulate glycerol gluconeogenesis in liver. Important regulator of appetite and adiposity; increased expression of the protein in liver after nutrient excess increases circulating satiety hormones and reduces appetite-stimulating neuropeptides and thus seems to provide a feedback mechanism to limit weight gain. This chain is Fructose-1,6-bisphosphatase 1 (Fbp1), found in Rattus norvegicus (Rat).